A 493-amino-acid polypeptide reads, in one-letter code: Glutamyl-tRNA(Gln) amidotransferase subunit A (493 aa).

Residues lysine 78 and serine 159 each act as charge relay system in the active site. Serine 183 acts as the Acyl-ester intermediate in catalysis.

It belongs to the amidase family. GatA subfamily. As to quaternary structure, heterotrimer of A, B and C subunits.

The enzyme catalyses L-glutamyl-tRNA(Gln) + L-glutamine + ATP + H2O = L-glutaminyl-tRNA(Gln) + L-glutamate + ADP + phosphate + H(+). Its function is as follows. Allows the formation of correctly charged Gln-tRNA(Gln) through the transamidation of misacylated Glu-tRNA(Gln) in organisms which lack glutaminyl-tRNA synthetase. The reaction takes place in the presence of glutamine and ATP through an activated gamma-phospho-Glu-tRNA(Gln). The chain is Glutamyl-tRNA(Gln) amidotransferase subunit A from Sphingopyxis alaskensis (strain DSM 13593 / LMG 18877 / RB2256) (Sphingomonas alaskensis).